Reading from the N-terminus, the 804-residue chain is DNA mismatch repair protein MutS (804 aa).

614–621 lines the ATP pocket; sequence GPNMAGKS.

Belongs to the DNA mismatch repair MutS family.

Functionally, this protein is involved in the repair of mismatches in DNA. It is possible that it carries out the mismatch recognition step. This protein has a weak ATPase activity. In Ehrlichia ruminantium (strain Welgevonden), this protein is DNA mismatch repair protein MutS.